The primary structure comprises 107 residues: Lipid-anchored protein YDL012C (107 aa).

Positions 1 to 18 (MSAQDYYGNSASKQSYSR) are enriched in polar residues. Residues 1–86 (MSAQDYYGNS…VQQQPASSGN (86 aa)) are disordered. At Ser2 the chain carries N-acetylserine. A Glycyl lysine isopeptide (Lys-Gly) (interchain with G-Cter in ubiquitin) cross-link involves residue Lys13. A compositionally biased stretch (low complexity) spans 35–81 (PSQSQQNYYPPQQQQQQYQQQPQYYQQQQPQYYQQHPQQPIYVQQQP).

This sequence belongs to the CYSTM1 family.

It localises to the cell membrane. In Saccharomyces cerevisiae (strain ATCC 204508 / S288c) (Baker's yeast), this protein is Lipid-anchored protein YDL012C.